Here is a 387-residue protein sequence, read N- to C-terminus: Putative protein FAM157C (387 aa).

Disordered stretches follow at residues 1-21 (MGPL…PLPK), 182-226 (TARP…GAEP), and 329-353 (RARD…TSSG).

Belongs to the FAM157 family.

This is Putative protein FAM157C (FAM157C) from Homo sapiens (Human).